Consider the following 490-residue polypeptide: Glutamyl-tRNA(Gln) amidotransferase subunit A (490 aa).

Catalysis depends on charge relay system residues lysine 77 and serine 152. The active-site Acyl-ester intermediate is serine 176.

Belongs to the amidase family. GatA subfamily. As to quaternary structure, heterotrimer of A, B and C subunits.

It carries out the reaction L-glutamyl-tRNA(Gln) + L-glutamine + ATP + H2O = L-glutaminyl-tRNA(Gln) + L-glutamate + ADP + phosphate + H(+). Functionally, allows the formation of correctly charged Gln-tRNA(Gln) through the transamidation of misacylated Glu-tRNA(Gln) in organisms which lack glutaminyl-tRNA synthetase. The reaction takes place in the presence of glutamine and ATP through an activated gamma-phospho-Glu-tRNA(Gln). The chain is Glutamyl-tRNA(Gln) amidotransferase subunit A from Limosilactobacillus reuteri (strain DSM 20016) (Lactobacillus reuteri).